A 474-amino-acid polypeptide reads, in one-letter code: Ribosomal RNA small subunit methyltransferase F (474 aa).

Residues 121-127 (ASAPGSK), E145, D172, and D190 each bind S-adenosyl-L-methionine. Residue C243 is the Nucleophile of the active site.

Belongs to the class I-like SAM-binding methyltransferase superfamily. RsmB/NOP family.

It is found in the cytoplasm. The catalysed reaction is cytidine(1407) in 16S rRNA + S-adenosyl-L-methionine = 5-methylcytidine(1407) in 16S rRNA + S-adenosyl-L-homocysteine + H(+). Specifically methylates the cytosine at position 1407 (m5C1407) of 16S rRNA. The chain is Ribosomal RNA small subunit methyltransferase F from Shewanella piezotolerans (strain WP3 / JCM 13877).